We begin with the raw amino-acid sequence, 453 residues long: Na(+)/H(+) antiporter NhaA (453 aa).

11 helical membrane-spanning segments follow: residues 28-48 (FLHI…AALI), 79-99 (LHFL…GMEI), 115-135 (ALPL…YFIL), 144-164 (GWAV…ALLG), 173-193 (VFLL…IAVF), 196-216 (GGMD…VLGM), 241-261 (TGAH…VFAP), 321-341 (VAFG…LDGI), 355-375 (VLIA…FLMV), 393-413 (LVGL…TLAF), and 424-444 (LGIL…GFFQ).

Belongs to the NhaA Na(+)/H(+) (TC 2.A.33) antiporter family.

It is found in the cell inner membrane. It catalyses the reaction Na(+)(in) + 2 H(+)(out) = Na(+)(out) + 2 H(+)(in). Na(+)/H(+) antiporter that extrudes sodium in exchange for external protons. This Janthinobacterium sp. (strain Marseille) (Minibacterium massiliensis) protein is Na(+)/H(+) antiporter NhaA.